Here is a 385-residue protein sequence, read N- to C-terminus: Urotensin-2 receptor (385 aa).

Over 1–53 (MALSLESTSFPMLAVSRSTASELPGGFNVSHNSSWTGPTDPSSLQDLVATGVI) the chain is Extracellular. N-linked (GlcNAc...) asparagine glycans are attached at residues Asn28 and Asn32. A helical transmembrane segment spans residues 54–76 (GAVLSTMGVVGVVGNVYTLVVMC). Residues 77 to 86 (RFLRASASMY) lie on the Cytoplasmic side of the membrane. The chain crosses the membrane as a helical span at residues 87–112 (VYVVNLALADLLYLLSIPFIVATYVT). At 113 to 123 (KDWHFGDVGCR) the chain is on the extracellular side. A disulfide bond links Cys122 and Cys198. Residues 124–145 (VLFSLDFLTMHASIFTLTIMSS) traverse the membrane as a helical segment. At 146 to 166 (ERYAAVLRPLDTVQRSKGYRK) the chain is on the cytoplasmic side. Residues 167 to 185 (LLALGTWLLALLLTLPMML) form a helical membrane-spanning segment. Residues 186–208 (AIRLVRRGSKSLCLPAWGPRAHR) lie on the Extracellular side of the membrane. A helical membrane pass occupies residues 209-231 (TYLTLLFGTSIVGPGLVIGLLYI). Topologically, residues 232–257 (RLARAYWLSQQASFKQTRRLPNPRVL) are cytoplasmic. The helical transmembrane segment at 258–283 (YLILGIVLLFWACFLPFWLWQLLAQY) threads the bilayer. Over 284–298 (HQAMPLTPETARIIN) the chain is Extracellular. Residues 299–320 (YLTACLTYGNSCINPFLYTLLT) form a helical membrane-spanning segment. Residues 321 to 385 (KNYREYLRGR…SPVPPNGAFV (65 aa)) are Cytoplasmic-facing.

The protein belongs to the G-protein coupled receptor 1 family.

Its subcellular location is the cell membrane. Its function is as follows. High affinity receptor for urotensin-2 and urotensin-2B. The activity of this receptor is mediated by a G-protein that activate a phosphatidylinositol-calcium second messenger system. The sequence is that of Urotensin-2 receptor (Uts2r) from Mus musculus (Mouse).